Consider the following 426-residue polypeptide: Serine--tRNA ligase (426 aa).

An L-serine-binding site is contributed by 233–235 (TAE). 264–266 (RSE) is an ATP binding site. An L-serine-binding site is contributed by E287. 351–354 (EISS) lines the ATP pocket. S387 provides a ligand contact to L-serine.

Belongs to the class-II aminoacyl-tRNA synthetase family. Type-1 seryl-tRNA synthetase subfamily. As to quaternary structure, homodimer. The tRNA molecule binds across the dimer.

It localises to the cytoplasm. It carries out the reaction tRNA(Ser) + L-serine + ATP = L-seryl-tRNA(Ser) + AMP + diphosphate + H(+). The enzyme catalyses tRNA(Sec) + L-serine + ATP = L-seryl-tRNA(Sec) + AMP + diphosphate + H(+). Its pathway is aminoacyl-tRNA biosynthesis; selenocysteinyl-tRNA(Sec) biosynthesis; L-seryl-tRNA(Sec) from L-serine and tRNA(Sec): step 1/1. Its function is as follows. Catalyzes the attachment of serine to tRNA(Ser). Is also able to aminoacylate tRNA(Sec) with serine, to form the misacylated tRNA L-seryl-tRNA(Sec), which will be further converted into selenocysteinyl-tRNA(Sec). The polypeptide is Serine--tRNA ligase (Pseudomonas savastanoi pv. phaseolicola (strain 1448A / Race 6) (Pseudomonas syringae pv. phaseolicola (strain 1448A / Race 6))).